The following is a 510-amino-acid chain: Inositol-3-phosphate synthase isozyme 2 (510 aa).

The protein belongs to the myo-inositol 1-phosphate synthase family. The cofactor is NAD(+). In terms of tissue distribution, expressed in siliques, leaves, roots, seed endosperm, but not in embryos. Highest expression in seeds. In leaves, only expressed in hydathodes and vascular tissue.

It is found in the cytoplasm. It carries out the reaction D-glucose 6-phosphate = 1D-myo-inositol 3-phosphate. It functions in the pathway polyol metabolism; myo-inositol biosynthesis; myo-inositol from D-glucose 6-phosphate: step 1/2. Functionally, key enzyme in myo-inositol biosynthesis pathway that catalyzes the conversion of glucose 6-phosphate to 1-myo-inositol 1-phosphate in a NAD-dependent manner. This Arabidopsis thaliana (Mouse-ear cress) protein is Inositol-3-phosphate synthase isozyme 2 (IPS2).